Reading from the N-terminus, the 1040-residue chain is Multidrug resistance protein MdtB (1040 aa).

The next 11 helical transmembrane spans lie at 15–37 (LFIL…GIIG), 345–362 (FELM…YLFL), 367–389 (ATII…MVFL), 396–418 (LTLM…VIEN), 438–460 (GEIG…PLLF), 472–494 (FAVT…TPMM), 535–557 (HPWL…WITI), 867–889 (VWLI…ESFI), 909–931 (LIIA…IGIV), 968–990 (ILMT…GVGA), and 1000–1022 (MVGG…YLLF).

This sequence belongs to the resistance-nodulation-cell division (RND) (TC 2.A.6) family. MdtB subfamily. Part of a tripartite efflux system composed of MdtA, MdtB and MdtC. MdtB forms a heteromultimer with MdtC.

Its subcellular location is the cell inner membrane. This chain is Multidrug resistance protein MdtB, found in Salmonella typhi.